The chain runs to 201 residues: CASP-like protein 2A1 (201 aa).

The tract at residues 1-27 (MEKRDKGSSPMATMMGSRDENEDVENT) is disordered. The Cytoplasmic segment spans residues 1-30 (MEKRDKGSSPMATMMGSRDENEDVENTTRT). Residues 31 to 51 (AETMLRLVPMALCVSALVVML) traverse the membrane as a helical segment. Residues 52–72 (KNTQTNDYGSLSYSDLGAFRY) are Extracellular-facing. A helical transmembrane segment spans residues 73 to 93 (LVHVNGICAGYSLLSAVIVAM). The Cytoplasmic segment spans residues 94–101 (PRASTMPR). A helical transmembrane segment spans residues 102-122 (AWAFFLLDQVLTYVILAAGTV). The Extracellular segment spans residues 123-152 (STEVLYLASKGDTTITWSEACVSFGGFCHK). A helical transmembrane segment spans residues 153 to 173 (ALISIVITFVVVICYAALSLL). Over 174–201 (SSYKLFSKYDSPVLTYPGKGIEIATFHG) the chain is Cytoplasmic.

This sequence belongs to the Casparian strip membrane proteins (CASP) family. As to quaternary structure, homodimer and heterodimers.

Its subcellular location is the cell membrane. This chain is CASP-like protein 2A1, found in Populus trichocarpa (Western balsam poplar).